A 66-amino-acid polypeptide reads, in one-letter code: Ocellatin-PT1 (66 aa).

A signal peptide spans Met-1–Cys-22. Positions Asp-23–Glu-39 are excised as a propeptide. Val-66 is subject to Valine amide.

Expressed by the skin glands.

It localises to the secreted. Has antibacterial activity against Gram-negative bacterium E.coli ATCC 25922 (MIC=300 uM) but not against S.pneumoniae ATCC 700603, S.choleraesuis ATCC 14028 or Gram-positive bacterium S.aureus ATCC 29313. Shows virtually no hemolytic activity and no cytotoxicity. The protein is Ocellatin-PT1 of Leptodactylus pustulatus (Ceara white-lipped frog).